We begin with the raw amino-acid sequence, 290 residues long: Translin-associated protein X (290 aa).

The disordered stretch occupies residues 1 to 34 (MNGKEGPGGFRKRKHDNFPHNQRREGKDASSSSP). Over residues 16-28 (DNFPHNQRREGKD) the composition is skewed to basic and acidic residues. Residues 73 to 208 (LLHRITSAPD…MRMCINSVGN (136 aa)) form an interaction with C1D region. Positions 129 and 197 each coordinate Mg(2+). Lysine 279 participates in a covalent cross-link: Glycyl lysine isopeptide (Lys-Gly) (interchain with G-Cter in SUMO2).

Belongs to the translin family. As to quaternary structure, ring-shaped heterooctamer of six TSN and two TSNAX subunits. Interacts with GOLGA3, TSNAXIP1, SUN1 and AKAP9. Interacts with the homodimeric form of C1D following gamma-radiation. Interacts with TSN and C1D in a mutually exclusive manner. Sumoylated with SUMO1. As to expression, detected in cerebellum.

The protein localises to the cytoplasm. It is found in the perinuclear region. Its subcellular location is the golgi apparatus. It localises to the nucleus. Functionally, acts in combination with TSN as an endonuclease involved in the activation of the RNA-induced silencing complex (RISC). Possible role in spermatogenesis. This Rattus norvegicus (Rat) protein is Translin-associated protein X (Tsnax).